A 538-amino-acid chain; its full sequence is MVAYRFLTLISLGLGSHCVSALQYGYNQLSTHKDPAVVAGAFPAINGTHLRSPAFTSPGTVSRGFSDGTSGPTRDETMEGFMRRLARSNSWMAYHEAGFKSEEGRKFPYMYLSASSSSVENPSSRKLRVWLQGGVHGNEPAGDQSMLVLLGDLAANQKWAAKLLEKMDILVLPRYNPDGVFYFQRYLATNFDPNRDHLKLARQQTRDIKELFAKFSPHIATDMHEFTAGRAFGPKKDFIYAADALFSAAKNLNIDEGIRQLSEKLFAKRMGKDIEAAGLRWDPYITLGESSSSKLLLREAGTDAKIGRNAMGLSQCVVFLCETRGIGIADQHFERRTLSGLVMAKSVLQTAVDNFDEVYNTIERGIRRFTNSRNDIVLTDKSPIIERTFGMLNTTDASLFDYPIDFATTTPAEPVLTRSRPRAYLIPPSWPDIVKRLEVFGVKADKLPYSYVGPVEALNVTSVTFDKEFYEGVVTTTVETKLVERSIRLPPGSYLVKTNQKNAALAFVALEPENIDSFASFGIIPVNTGDQYPIFRLK.

A signal peptide spans 1–21 (MVAYRFLTLISLGLGSHCVSA). An N-linked (GlcNAc...) asparagine glycan is attached at N46. The interval 53–76 (PAFTSPGTVSRGFSDGTSGPTRDE) is disordered. The region spanning 71–351 (GPTRDETMEG…VMAKSVLQTA (281 aa)) is the Peptidase M14 domain. Zn(2+) is bound by residues H136, E139, and H224. Catalysis depends on E322, which acts as the Proton donor/acceptor. N-linked (GlcNAc...) asparagine glycosylation is found at N393 and N459.

Belongs to the peptidase M14 family. Requires Zn(2+) as cofactor.

It is found in the secreted. Extracellular metalloprotease that contributes to pathogenicity. In Trichophyton rubrum (Athlete's foot fungus), this protein is Carboxypeptidase 2 (MCPB).